The sequence spans 144 residues: Methylglyoxal synthase (144 aa).

The MGS-like domain maps to 1–144 (MKIALIAHDE…KSGEEKETER (144 aa)). Residues His8, Lys12, 34–37 (TGTT), and 54–55 (SG) contribute to the substrate site. The active-site Proton donor/acceptor is Asp60. Position 87 (His87) interacts with substrate.

The protein belongs to the methylglyoxal synthase family.

It carries out the reaction dihydroxyacetone phosphate = methylglyoxal + phosphate. In terms of biological role, catalyzes the formation of methylglyoxal from dihydroxyacetone phosphate. This Geobacillus thermodenitrificans (strain NG80-2) protein is Methylglyoxal synthase.